The primary structure comprises 696 residues: Polyribonucleotide nucleotidyltransferase (696 aa).

Residues Asp489 and Asp495 each contribute to the Mg(2+) site. One can recognise a KH domain in the interval 556 to 615; that stretch reads PQYVTMKINPEKIRDVIGKGGVVIREITEATNCAIDISDDGTIKIAAHTTEEGEAAKRRI. The 69-residue stretch at 625–693 folds into the S1 motif domain; that stretch reads GKVYEGTVVK…RQGRVRLSMK (69 aa).

The protein belongs to the polyribonucleotide nucleotidyltransferase family. Component of the RNA degradosome, which is a multiprotein complex involved in RNA processing and mRNA degradation. Mg(2+) serves as cofactor.

Its subcellular location is the cytoplasm. The catalysed reaction is RNA(n+1) + phosphate = RNA(n) + a ribonucleoside 5'-diphosphate. Functionally, involved in mRNA degradation. Catalyzes the phosphorolysis of single-stranded polyribonucleotides processively in the 3'- to 5'-direction. The chain is Polyribonucleotide nucleotidyltransferase from Coxiella burnetii (strain CbuK_Q154) (Coxiella burnetii (strain Q154)).